The following is a 319-amino-acid chain: Acetyl-coenzyme A carboxylase carboxyl transferase subunit alpha (319 aa).

The CoA carboxyltransferase C-terminal domain occupies 35 to 296 (DLDKEIEQLE…KATLLRQLAE (262 aa)).

This sequence belongs to the AccA family. Acetyl-CoA carboxylase is a heterohexamer composed of biotin carboxyl carrier protein (AccB), biotin carboxylase (AccC) and two subunits each of ACCase subunit alpha (AccA) and ACCase subunit beta (AccD).

It is found in the cytoplasm. The catalysed reaction is N(6)-carboxybiotinyl-L-lysyl-[protein] + acetyl-CoA = N(6)-biotinyl-L-lysyl-[protein] + malonyl-CoA. It functions in the pathway lipid metabolism; malonyl-CoA biosynthesis; malonyl-CoA from acetyl-CoA: step 1/1. Functionally, component of the acetyl coenzyme A carboxylase (ACC) complex. First, biotin carboxylase catalyzes the carboxylation of biotin on its carrier protein (BCCP) and then the CO(2) group is transferred by the carboxyltransferase to acetyl-CoA to form malonyl-CoA. The polypeptide is Acetyl-coenzyme A carboxylase carboxyl transferase subunit alpha (Vibrio vulnificus (strain CMCP6)).